We begin with the raw amino-acid sequence, 142 residues long: Transcriptional regulator MraZ (142 aa).

SpoVT-AbrB domains follow at residues 5–47 (EFTH…PLNE) and 76–119 (ATDC…SAER).

The protein belongs to the MraZ family. In terms of assembly, forms oligomers.

The protein localises to the cytoplasm. It localises to the nucleoid. This is Transcriptional regulator MraZ from Limosilactobacillus reuteri (strain DSM 20016) (Lactobacillus reuteri).